The chain runs to 443 residues: MESTLSLTIRSQWLERHDDEHKIRRDDHRSPFQRDRARILHSAAFRRLQAKTQVHGNSLEDFHRTRLTHSLEAAQLGTGIVAQIKKKQPEYRDLLPTDSLIDALCLAHDIGHPPYGHGGEVALNYMMRDHGGFEGNAQTFRIVTQLEPYTEHFGMNLSRRTLLGLIKYPAFISQTRAASQPAPVSHQRQIKAKQWSPAKGIYDCDKALFDWVLAPLSETDKQQLNAMRDCPHDALSHRKTRYKSLDCSIMELADDIAYGVHDLEDAIVLGLVTRSQWQEGAASQLADCGDPWFEKHISSIGEMLFSGQHHQRKDAIGGMVNALLTSIDVKPVDGEFESPLLAFNAYLDIGMEKALSILKHFVSQYVIQIPQVQIVEYKGQQIIMDLFEALSADPQRLLPLPTRHRWELAETDTSKMRVIADYISSMTDGHAQRLHQQLFSSHH.

Residues 66 to 259 (RLTHSLEAAQ…MELADDIAYG (194 aa)) form the HD domain.

The protein belongs to the dGTPase family. Type 2 subfamily.

This chain is Deoxyguanosinetriphosphate triphosphohydrolase-like protein, found in Vibrio vulnificus (strain CMCP6).